Reading from the N-terminus, the 188-residue chain is Putative manganese efflux pump MntP (188 aa).

Transmembrane regions (helical) follow at residues 2-22 (LYIEVLLLAIGLSMDSLAVSV), 40-60 (IASVLGIFQAGMTVIGYTMGL), 66-86 (ICAFDHWIAFTLLLYLGGKMI), 107-127 (LCGLGIATSIDALAVGISLAI), 133-153 (LLQASTIGVVTFAISAFGVYF), and 167-187 (LIGGLILIGIGTKILIEHLFF).

Belongs to the MntP (TC 9.B.29) family.

It localises to the cell inner membrane. Its function is as follows. Probably functions as a manganese efflux pump. This is Putative manganese efflux pump MntP from Parabacteroides distasonis (strain ATCC 8503 / DSM 20701 / CIP 104284 / JCM 5825 / NCTC 11152).